A 249-amino-acid polypeptide reads, in one-letter code: CDP-diacylglycerol pyrophosphatase (249 aa).

The helical transmembrane segment at 5–25 (GYFLLAVIVIVAAAGVGYWKF) threads the bilayer.

The protein belongs to the Cdh family.

It localises to the cell inner membrane. The catalysed reaction is a CDP-1,2-diacyl-sn-glycerol + H2O = a 1,2-diacyl-sn-glycero-3-phosphate + CMP + 2 H(+). It participates in phospholipid metabolism; CDP-diacylglycerol degradation; phosphatidate from CDP-diacylglycerol: step 1/1. The chain is CDP-diacylglycerol pyrophosphatase from Salmonella arizonae (strain ATCC BAA-731 / CDC346-86 / RSK2980).